Reading from the N-terminus, the 414-residue chain is Clusterin-associated protein 1 (414 aa).

Residues 198-291 (KTKDLLNNVA…ERFEEAKNTL (94 aa)) adopt a coiled-coil conformation. Positions 305 to 414 (LLKSGSNDDS…EPLDESDNDF (110 aa)) are disordered. Acidic residues-rich tracts occupy residues 312 to 328 (DDSD…DSEL) and 360 to 389 (DSDD…EDES). Phosphoserine is present on residues S314, S324, and S326. Residue S410 is modified to Phosphoserine.

This sequence belongs to the CLUAP1 family. Interacts with CLU/clusterin. Interacts with UBXN10; the interaction is direct.

It localises to the cell projection. It is found in the cilium. The protein localises to the nucleus. Functionally, required for cilia biogenesis. Appears to function within the multiple intraflagellar transport complex B (IFT-B). Key regulator of hedgehog signaling. The protein is Clusterin-associated protein 1 (CLUAP1) of Macaca fascicularis (Crab-eating macaque).